The primary structure comprises 264 residues: Proteasome subunit beta type-4 (264 aa).

Residue methionine 1 is modified to N-acetylmethionine. The propeptide occupies 1 to 45; that stretch reads MEAFWESRAGHWAGGPAPGQFYRIPATPSGLMDPASAPCEGPITR. A Phosphotyrosine modification is found at tyrosine 102.

The protein belongs to the peptidase T1B family. In terms of assembly, the 26S proteasome consists of a 20S proteasome core and two 19S regulatory subunits. The 20S proteasome core is a barrel-shaped complex made of 28 subunits that are arranged in four stacked rings. The two outer rings are each formed by seven alpha subunits, and the two inner rings are formed by seven beta subunits. The proteolytic activity is exerted by three beta-subunits PSMB5, PSMB6 and PSMB7. Forms a ternary complex with SMAD1 and OAZ1 before PSMB4 is incorporated into the 20S proteasome. Interacts with PRPF19. Detected in liver (at protein level).

The protein localises to the cytoplasm. It is found in the nucleus. In terms of biological role, non-catalytic component of the 20S core proteasome complex involved in the proteolytic degradation of most intracellular proteins. This complex plays numerous essential roles within the cell by associating with different regulatory particles. Associated with two 19S regulatory particles, forms the 26S proteasome and thus participates in the ATP-dependent degradation of ubiquitinated proteins. The 26S proteasome plays a key role in the maintenance of protein homeostasis by removing misfolded or damaged proteins that could impair cellular functions, and by removing proteins whose functions are no longer required. Associated with the PA200 or PA28, the 20S proteasome mediates ubiquitin-independent protein degradation. This type of proteolysis is required in several pathways including spermatogenesis (20S-PA200 complex) or generation of a subset of MHC class I-presented antigenic peptides (20S-PA28 complex). SMAD1/OAZ1/PSMB4 complex mediates the degradation of the CREBBP/EP300 repressor SNIP1. The protein is Proteasome subunit beta type-4 (Psmb4) of Mus musculus (Mouse).